Here is a 494-residue protein sequence, read N- to C-terminus: Sulfate adenylyltransferase subunit 1 (494 aa).

A tr-type G domain is found at 28–242 (TRPLRLITCG…TLELATVRST (215 aa)). The segment at 37 to 44 (GSVDDGKS) is G1. GTP is bound at residue 37 to 44 (GSVDDGKS). The G2 stretch occupies residues 94-98 (GITID). The interval 115–118 (DTPG) is G3. GTP contacts are provided by residues 115–119 (DTPGH) and 170–173 (NKID). Positions 170–173 (NKID) are G4. Residues 207 to 209 (SAL) are G5.

Belongs to the TRAFAC class translation factor GTPase superfamily. Classic translation factor GTPase family. CysN/NodQ subfamily. In terms of assembly, heterodimer composed of CysD, the smaller subunit, and CysN.

The catalysed reaction is sulfate + ATP + H(+) = adenosine 5'-phosphosulfate + diphosphate. It participates in sulfur metabolism; hydrogen sulfide biosynthesis; sulfite from sulfate: step 1/3. Its function is as follows. With CysD forms the ATP sulfurylase (ATPS) that catalyzes the adenylation of sulfate producing adenosine 5'-phosphosulfate (APS) and diphosphate, the first enzymatic step in sulfur assimilation pathway. APS synthesis involves the formation of a high-energy phosphoric-sulfuric acid anhydride bond driven by GTP hydrolysis by CysN coupled to ATP hydrolysis by CysD. In Agrobacterium fabrum (strain C58 / ATCC 33970) (Agrobacterium tumefaciens (strain C58)), this protein is Sulfate adenylyltransferase subunit 1.